We begin with the raw amino-acid sequence, 479 residues long: Aldehyde dehydrogenase family 3 member B3 (479 aa).

Residues Glu223 and Cys257 contribute to the active site. Cys476 carries S-geranylgeranyl cysteine lipidation. The propeptide at 477 to 479 (TLL) is removed in mature form.

It belongs to the aldehyde dehydrogenase family. Post-translationally, geranylgeranylation is important for membrane localization and enzyme activity. In terms of tissue distribution, expressed in testis, kidney, small intestine, spleen, white adipose tissue, liver and lung.

Its subcellular location is the cell membrane. The enzyme catalyses an aldehyde + NAD(+) + H2O = a carboxylate + NADH + 2 H(+). The catalysed reaction is hexadecanoate + NADH + 2 H(+) = hexadecanal + NAD(+) + H2O. It catalyses the reaction octanal + NAD(+) + H2O = octanoate + NADH + 2 H(+). Functionally, oxidizes medium and long chain aldehydes into non-toxic fatty acids. This is Aldehyde dehydrogenase family 3 member B3 from Mus musculus (Mouse).